A 138-amino-acid chain; its full sequence is Histone H2B.8 (138 aa).

Basic and acidic residues predominate over residues 1–38; it reads MAPKAAEKKPAGKKPAEKAPAEKLPKAEKKITKEGGSE. The disordered stretch occupies residues 1–45; the sequence is MAPKAAEKKPAGKKPAEKAPAEKLPKAEKKITKEGGSEKKKKKSK. At A2 the chain carries N,N,N-trimethylalanine; alternate. A N,N-dimethylalanine; alternate modification is found at A2. N-methylalanine; alternate is present on A2. K4 carries the N6-methyllysine modification. N6-acetyllysine is present on residues K8 and K13. K14 bears the N6,N6-dimethyllysine mark. K18, K23, K29, and K30 each carry N6-acetyllysine. A Glycyl lysine isopeptide (Lys-Gly) (interchain with G-Cter in ubiquitin) cross-link involves residue K134.

Belongs to the histone H2B family. The nucleosome is a histone octamer containing two molecules each of H2A, H2B, H3 and H4 assembled in one H3-H4 heterotetramer and two H2A-H2B heterodimers. The octamer wraps approximately 147 bp of DNA. In terms of processing, can be acetylated to form H2BK6ac, H2BK33ac and H2BK34ac. Monoubiquitinated by BRE1 to form H2BK143ub1 and deubiquitinated by UBP26. Required for heterochromatic histone H3 di- and trimethylation at H3K4me. May give a specific tag for epigenetic transcriptional activation.

Its subcellular location is the nucleus. It localises to the chromosome. In terms of biological role, core component of nucleosome. Nucleosomes wrap and compact DNA into chromatin, limiting DNA accessibility to the cellular machineries which require DNA as a template. Histones thereby play a central role in transcription regulation, DNA repair, DNA replication and chromosomal stability. DNA accessibility is regulated via a complex set of post-translational modifications of histones, also called histone code, and nucleosome remodeling. In Arabidopsis thaliana (Mouse-ear cress), this protein is Histone H2B.8.